Reading from the N-terminus, the 561-residue chain is Dihydroxy-acid dehydratase 3 (561 aa).

A [2Fe-2S] cluster-binding site is contributed by Cys-50. Asp-82 lines the Mg(2+) pocket. [2Fe-2S] cluster is bound at residue Cys-123. Asp-124 and Lys-125 together coordinate Mg(2+). N6-carboxylysine is present on Lys-125. Cys-195 contributes to the [2Fe-2S] cluster binding site. Glu-447 is a Mg(2+) binding site. Ser-473 (proton acceptor) is an active-site residue.

Belongs to the IlvD/Edd family. As to quaternary structure, homodimer. [2Fe-2S] cluster serves as cofactor. It depends on Mg(2+) as a cofactor.

It catalyses the reaction (2R)-2,3-dihydroxy-3-methylbutanoate = 3-methyl-2-oxobutanoate + H2O. The catalysed reaction is (2R,3R)-2,3-dihydroxy-3-methylpentanoate = (S)-3-methyl-2-oxopentanoate + H2O. It functions in the pathway amino-acid biosynthesis; L-isoleucine biosynthesis; L-isoleucine from 2-oxobutanoate: step 3/4. It participates in amino-acid biosynthesis; L-valine biosynthesis; L-valine from pyruvate: step 3/4. Its function is as follows. Functions in the biosynthesis of branched-chain amino acids. Catalyzes the dehydration of (2R,3R)-2,3-dihydroxy-3-methylpentanoate (2,3-dihydroxy-3-methylvalerate) into 2-oxo-3-methylpentanoate (2-oxo-3-methylvalerate) and of (2R)-2,3-dihydroxy-3-methylbutanoate (2,3-dihydroxyisovalerate) into 2-oxo-3-methylbutanoate (2-oxoisovalerate), the penultimate precursor to L-isoleucine and L-valine, respectively. The chain is Dihydroxy-acid dehydratase 3 from Bordetella bronchiseptica (strain ATCC BAA-588 / NCTC 13252 / RB50) (Alcaligenes bronchisepticus).